The following is a 270-amino-acid chain: ATP synthase subunit a (270 aa).

The next 5 membrane-spanning stretches (helical) occupy residues 37–57, 98–118, 143–163, 217–237, and 239–259; these read NVHI…LWVF, IAPL…MDLV, DVNI…YYSI, VVFI…GALP, and AIFH…LTIV.

Belongs to the ATPase A chain family. F-type ATPases have 2 components, CF(1) - the catalytic core - and CF(0) - the membrane proton channel. CF(1) has five subunits: alpha(3), beta(3), gamma(1), delta(1), epsilon(1). CF(0) has three main subunits: a(1), b(2) and c(9-12). The alpha and beta chains form an alternating ring which encloses part of the gamma chain. CF(1) is attached to CF(0) by a central stalk formed by the gamma and epsilon chains, while a peripheral stalk is formed by the delta and b chains.

It localises to the cell inner membrane. Its function is as follows. Key component of the proton channel; it plays a direct role in the translocation of protons across the membrane. The protein is ATP synthase subunit a of Aliivibrio fischeri (strain ATCC 700601 / ES114) (Vibrio fischeri).